The primary structure comprises 443 residues: Exodeoxyribonuclease 7 large subunit (443 aa).

The protein belongs to the XseA family. As to quaternary structure, heterooligomer composed of large and small subunits.

Its subcellular location is the cytoplasm. It catalyses the reaction Exonucleolytic cleavage in either 5'- to 3'- or 3'- to 5'-direction to yield nucleoside 5'-phosphates.. In terms of biological role, bidirectionally degrades single-stranded DNA into large acid-insoluble oligonucleotides, which are then degraded further into small acid-soluble oligonucleotides. This Legionella pneumophila (strain Paris) protein is Exodeoxyribonuclease 7 large subunit.